A 303-amino-acid chain; its full sequence is MKRRSKESNYNISSQRRRYREISTREKSRYIDIPLDITVEILKKLPAKSLVRFQCVSKQWSTIIGSRRDFIDSIVARSMTHPQQWWDVLLIFHYQSDKSSFFIFTHPLNTNQELVSIPGLTVDCYGYIRDDLFNHVFVFGYDPVKNKYKVMCLMITKSEEFENACFVFTLRDPKKQWRNVKCGIQHHYPWLPAVCINGAIYYRATEDHGSTFFLVSFDVRSEKFDHVNAPKELIDSKDSTLINYQGKLGFVSYERSVGIWVMEDHNKQGWSKVVDSSIGSGEIVFINKMVICHDTVYVVFFLS.

Positions 27–74 constitute an F-box domain; sequence KSRYIDIPLDITVEILKKLPAKSLVRFQCVSKQWSTIIGSRRDFIDSI.

This Arabidopsis thaliana (Mouse-ear cress) protein is Putative F-box protein At5g62060.